A 302-amino-acid chain; its full sequence is Sulfate adenylyltransferase subunit 2 (302 aa).

It belongs to the PAPS reductase family. CysD subfamily. As to quaternary structure, heterodimer composed of CysD, the smaller subunit, and CysN.

The catalysed reaction is sulfate + ATP + H(+) = adenosine 5'-phosphosulfate + diphosphate. It functions in the pathway sulfur metabolism; hydrogen sulfide biosynthesis; sulfite from sulfate: step 1/3. In terms of biological role, with CysN forms the ATP sulfurylase (ATPS) that catalyzes the adenylation of sulfate producing adenosine 5'-phosphosulfate (APS) and diphosphate, the first enzymatic step in sulfur assimilation pathway. APS synthesis involves the formation of a high-energy phosphoric-sulfuric acid anhydride bond driven by GTP hydrolysis by CysN coupled to ATP hydrolysis by CysD. This Aeromonas hydrophila subsp. hydrophila (strain ATCC 7966 / DSM 30187 / BCRC 13018 / CCUG 14551 / JCM 1027 / KCTC 2358 / NCIMB 9240 / NCTC 8049) protein is Sulfate adenylyltransferase subunit 2.